A 371-amino-acid chain; its full sequence is Epoxyqueuosine reductase (371 aa).

D137 serves as the catalytic Proton donor. In terms of domain architecture, 4Fe-4S ferredoxin-type spans 179–211 (IPLPVDTPVENQCGKCTACISSCPTNAILENGV). [4Fe-4S] cluster contacts are provided by C191, C194, C197, C201, C217, C244, C247, and C251.

The protein belongs to the QueG family. In terms of assembly, monomer. Requires cob(II)alamin as cofactor. The cofactor is [4Fe-4S] cluster.

It is found in the cytoplasm. The enzyme catalyses epoxyqueuosine(34) in tRNA + AH2 = queuosine(34) in tRNA + A + H2O. The protein operates within tRNA modification; tRNA-queuosine biosynthesis. Functionally, catalyzes the conversion of epoxyqueuosine (oQ) to queuosine (Q), which is a hypermodified base found in the wobble positions of tRNA(Asp), tRNA(Asn), tRNA(His) and tRNA(Tyr). The protein is Epoxyqueuosine reductase of Aliivibrio fischeri (strain ATCC 700601 / ES114) (Vibrio fischeri).